The chain runs to 128 residues: Putative histidinol dehydrogenase (128 aa).

Residues 21–84 (QRPDIAPRHH…EGQEKASGRR (64 aa)) form a disordered region. 2 stretches are compositionally biased toward basic and acidic residues: residues 34-50 (HRAEREAVEADRSRRTA) and 72-81 (QGREGQEKAS).

This sequence belongs to the histidinol dehydrogenase family.

It catalyses the reaction L-histidinol + 2 NAD(+) + H2O = L-histidine + 2 NADH + 3 H(+). It functions in the pathway amino-acid biosynthesis; L-histidine biosynthesis; L-histidine from 5-phospho-alpha-D-ribose 1-diphosphate: step 9/9. Its function is as follows. Catalyzes the sequential NAD-dependent oxidations of L-histidinol to L-histidinaldehyde and then to L-histidine. This chain is Putative histidinol dehydrogenase (hisD), found in Azospirillum brasilense.